Here is a 336-residue protein sequence, read N- to C-terminus: Ketol-acid reductoisomerase (NADP(+)) (336 aa).

A KARI N-terminal Rossmann domain is found at 5-185; the sequence is SKIYTDKDSN…GATRAGVIPT (181 aa). NADP(+)-binding positions include 28 to 31, Ser56, and 86 to 89; these read YGSQ and DMVQ. His111 is an active-site residue. Gly137 serves as a coordination point for NADP(+). The 146-residue stretch at 186–331 folds into the KARI C-terminal knotted domain; the sequence is TFKEETETDL…NQLKDLIQKG (146 aa). Residues Asp194, Glu198, Glu230, and Glu234 each contribute to the Mg(2+) site. Ser255 is a binding site for substrate.

This sequence belongs to the ketol-acid reductoisomerase family. The cofactor is Mg(2+).

The enzyme catalyses (2R)-2,3-dihydroxy-3-methylbutanoate + NADP(+) = (2S)-2-acetolactate + NADPH + H(+). It catalyses the reaction (2R,3R)-2,3-dihydroxy-3-methylpentanoate + NADP(+) = (S)-2-ethyl-2-hydroxy-3-oxobutanoate + NADPH + H(+). Its pathway is amino-acid biosynthesis; L-isoleucine biosynthesis; L-isoleucine from 2-oxobutanoate: step 2/4. The protein operates within amino-acid biosynthesis; L-valine biosynthesis; L-valine from pyruvate: step 2/4. Its function is as follows. Involved in the biosynthesis of branched-chain amino acids (BCAA). Catalyzes an alkyl-migration followed by a ketol-acid reduction of (S)-2-acetolactate (S2AL) to yield (R)-2,3-dihydroxy-isovalerate. In the isomerase reaction, S2AL is rearranged via a Mg-dependent methyl migration to produce 3-hydroxy-3-methyl-2-ketobutyrate (HMKB). In the reductase reaction, this 2-ketoacid undergoes a metal-dependent reduction by NADPH to yield (R)-2,3-dihydroxy-isovalerate. The protein is Ketol-acid reductoisomerase (NADP(+)) of Saccharolobus islandicus (strain Y.N.15.51 / Yellowstone #2) (Sulfolobus islandicus).